Here is a 244-residue protein sequence, read N- to C-terminus: 15,16-dihydrobiliverdin:ferredoxin oxidoreductase (244 aa).

The protein belongs to the HY2 family.

It catalyses the reaction 15,16-dihydrobiliverdin + oxidized 2[4Fe-4S]-[ferredoxin] = biliverdin IXalpha + reduced 2[4Fe-4S]-[ferredoxin] + 2 H(+). In terms of biological role, catalyzes the two-electron reduction of biliverdin IX-alpha at the C15 methine bridge. This is 15,16-dihydrobiliverdin:ferredoxin oxidoreductase (pebA) from Nostoc punctiforme (strain ATCC 29133 / PCC 73102).